The sequence spans 257 residues: Discoidin-2 (257 aa).

Residues 1-155 (MSVPAGSVSC…SLRWELYALP (155 aa)) are beta-sandwich. The F5/8 type C domain occupies 10–154 (CLANALLNLR…ISLRWELYAL (145 aa)). 3 residues coordinate Ca(2+): asparagine 39, serine 40, and aspartate 47. The Cell attachment site signature appears at 81–83 (RGD). Position 84 is a phosphohistidine (histidine 84). A linker region spans residues 156-162 (VKSYSNP). A lectin-like region spans residues 163–257 (SVQVGEVSIG…FDYVAVEFNN (95 aa)). Positions 209, 218, and 238 each coordinate a carbohydrate.

As to quaternary structure, homotrimer. Post-translationally, the N-terminus is blocked. In terms of tissue distribution, maturing spore cells.

Galactose-binding lectin. May be necessary for the primary process of spore formation and may be involved in spore coat formation. This chain is Discoidin-2 (dscE), found in Dictyostelium discoideum (Social amoeba).